A 475-amino-acid chain; its full sequence is Glutamate--tRNA ligase (475 aa).

The short motif at 8–18 (PSPTGTLHIGT) is the 'HIGH' region element. A 'KMSKS' region motif is present at residues 247 to 251 (KLSKR). Lys-250 lines the ATP pocket.

The protein belongs to the class-I aminoacyl-tRNA synthetase family. Glutamate--tRNA ligase type 1 subfamily. As to quaternary structure, monomer.

It localises to the cytoplasm. It catalyses the reaction tRNA(Glu) + L-glutamate + ATP = L-glutamyl-tRNA(Glu) + AMP + diphosphate. In terms of biological role, catalyzes the attachment of glutamate to tRNA(Glu) in a two-step reaction: glutamate is first activated by ATP to form Glu-AMP and then transferred to the acceptor end of tRNA(Glu). In Synechococcus sp. (strain RCC307), this protein is Glutamate--tRNA ligase.